The following is a 134-amino-acid chain: MDFRTGDNITAAQLKNGVFIWEVRNPLSFKIMQHRQIRPGSQMYVTQIRIMFNHGLKKALLMHKCFLDLTLYHYLTATSGMILSTFSDQLFRYLNNLGVISIGNVLKGASHILYEKLHHVEDVSLTHNVQYKLY.

The protein belongs to the geminiviridae replication enhancer protein family. As to quaternary structure, homooligomer. Interacts with the replication-associated protein (REP). Interacts with host proliferating cell nuclear antigen (PCNA). Interacts with host retinoblastoma-related protein 1 (RBR1), and may thereby deregulate the host cell cycle. Oligomerization and interaction with PCNA are necessary for optimal replication enhancement.

Its function is as follows. Increases viral DNA accumulation. Enhances infectivity and symptom expression. This Mungbean yellow mosaic virus (strain Vigna) (MYMV) protein is Replication enhancer protein.